We begin with the raw amino-acid sequence, 397 residues long: Cysteine desulfurase (397 aa).

Residues Asn-148, Gln-176, and Ser-196–His-198 contribute to the pyridoxal 5'-phosphate site. Position 199 is an N6-(pyridoxal phosphate)lysine (Lys-199). Thr-234 contributes to the pyridoxal 5'-phosphate binding site. Cys-321 acts as the Cysteine persulfide intermediate in catalysis. [2Fe-2S] cluster is bound at residue Cys-321.

The protein belongs to the class-V pyridoxal-phosphate-dependent aminotransferase family. NifS/IscS subfamily. Homodimer. Pyridoxal 5'-phosphate is required as a cofactor.

It catalyses the reaction (sulfur carrier)-H + L-cysteine = (sulfur carrier)-SH + L-alanine. Functionally, catalyzes the removal of elemental sulfur atoms from cysteine to produce alanine. Seems to participate in the biosynthesis of the nitrogenase metalloclusters by providing the inorganic sulfur required for the Fe-S core formation. The protein is Cysteine desulfurase of Klebsiella pneumoniae.